The primary structure comprises 98 residues: Integration host factor subunit alpha (98 aa).

Belongs to the bacterial histone-like protein family. Heterodimer of an alpha and a beta chain.

Functionally, this protein is one of the two subunits of integration host factor, a specific DNA-binding protein that functions in genetic recombination as well as in transcriptional and translational control. The protein is Integration host factor subunit alpha of Acinetobacter baumannii (strain AB307-0294).